Reading from the N-terminus, the 89-residue chain is Small ribosomal subunit protein uS15 (89 aa).

Belongs to the universal ribosomal protein uS15 family. As to quaternary structure, part of the 30S ribosomal subunit. Forms a bridge to the 50S subunit in the 70S ribosome, contacting the 23S rRNA.

In terms of biological role, one of the primary rRNA binding proteins, it binds directly to 16S rRNA where it helps nucleate assembly of the platform of the 30S subunit by binding and bridging several RNA helices of the 16S rRNA. Functionally, forms an intersubunit bridge (bridge B4) with the 23S rRNA of the 50S subunit in the ribosome. The sequence is that of Small ribosomal subunit protein uS15 from Cereibacter sphaeroides (strain ATCC 17025 / ATH 2.4.3) (Rhodobacter sphaeroides).